Here is a 633-residue protein sequence, read N- to C-terminus: Glutamyl-tRNA(Gln) amidotransferase subunit E (633 aa).

Positions 414–437 (ALPDGNTEYMRPLPGKARMYPETD) are disordered.

It belongs to the GatB/GatE family. GatE subfamily. In terms of assembly, heterodimer of GatD and GatE.

The catalysed reaction is L-glutamyl-tRNA(Gln) + L-glutamine + ATP + H2O = L-glutaminyl-tRNA(Gln) + L-glutamate + ADP + phosphate + H(+). Its function is as follows. Allows the formation of correctly charged Gln-tRNA(Gln) through the transamidation of misacylated Glu-tRNA(Gln) in organisms which lack glutaminyl-tRNA synthetase. The reaction takes place in the presence of glutamine and ATP through an activated gamma-phospho-Glu-tRNA(Gln). The GatDE system is specific for glutamate and does not act on aspartate. This chain is Glutamyl-tRNA(Gln) amidotransferase subunit E, found in Pyrococcus abyssi (strain GE5 / Orsay).